Consider the following 996-residue polypeptide: Cilia- and flagella-associated protein 251 (996 aa).

WD repeat units follow at residues 73-114 (GHCN…PKKT), 118-164 (PHPN…EPCL), 168-211 (EFDR…KGFN), 219-258 (PSLK…EKVD), 282-319 (KGSN…IAWF), 399-438 (SIVS…SVLS), 445-485 (TDKE…WQNS), 494-533 (QGKP…FDVN), 547-593 (IHHS…YSKQ), 615-658 (EQET…FKFC), and 719-759 (AHPD…LEQI). The segment at 971 to 996 (DLEGEERDDNIEDQYEDEENEEYDQD) is disordered.

Its subcellular location is the cell projection. The protein localises to the cilium. Functionally, as component of a spoke-associated complex, regulates ciliary mobility by mediating a stable and functional assembly of the radial spoke 3 (RS3). This chain is Cilia- and flagella-associated protein 251, found in Tetrahymena thermophila (strain SB210).